The chain runs to 142 residues: Large ribosomal subunit protein uL13 (142 aa).

Belongs to the universal ribosomal protein uL13 family. As to quaternary structure, part of the 50S ribosomal subunit.

Functionally, this protein is one of the early assembly proteins of the 50S ribosomal subunit, although it is not seen to bind rRNA by itself. It is important during the early stages of 50S assembly. This Azoarcus sp. (strain BH72) protein is Large ribosomal subunit protein uL13.